Reading from the N-terminus, the 98-residue chain is NADH-ubiquinone oxidoreductase chain 4L (98 aa).

3 consecutive transmembrane segments (helical) span residues 1–21 (MPIIYTNIVLAFMISLLGMLI), 29–49 (SLLCLEGMMLSLFMMSTLMAL), and 58–78 (IVPIALLVFAACEAAVGLALL).

Belongs to the complex I subunit 4L family. Core subunit of respiratory chain NADH dehydrogenase (Complex I) which is composed of 45 different subunits.

It localises to the mitochondrion inner membrane. It catalyses the reaction a ubiquinone + NADH + 5 H(+)(in) = a ubiquinol + NAD(+) + 4 H(+)(out). Functionally, core subunit of the mitochondrial membrane respiratory chain NADH dehydrogenase (Complex I) which catalyzes electron transfer from NADH through the respiratory chain, using ubiquinone as an electron acceptor. Part of the enzyme membrane arm which is embedded in the lipid bilayer and involved in proton translocation. The polypeptide is NADH-ubiquinone oxidoreductase chain 4L (MT-ND4L) (Nasalis larvatus (Proboscis monkey)).